A 548-amino-acid chain; its full sequence is Alpha-humulene synthase (548 aa).

D302, D306, and E453 together coordinate Mg(2+). The DDXXD motif signature appears at 302–306 (DDIYD).

Belongs to the terpene synthase family. As to expression, mostly expressed in rhizomes.

It carries out the reaction (2E,6E)-farnesyl diphosphate = alpha-humulene + diphosphate. Functionally, catalyzes the formation of alpha-humulene in the first step of zerumbone biosynthesis, a highly promising multi-anticancer agent. Also mediates formation of beta-caryophyllene at a much lower level. This chain is Alpha-humulene synthase (ZSS1), found in Zingiber zerumbet (Shampoo ginger).